Reading from the N-terminus, the 439-residue chain is 26S proteasome regulatory subunit 4 (439 aa).

Disordered stretches follow at residues 1–48 (MGQN…AMKL) and 82–104 (ERLK…LRGT). Basic and acidic residues-rich tracts occupy residues 12-25 (GEKK…KKYE) and 82-102 (ERLK…DDLR). An ATP-binding site is contributed by 225 to 232 (GPPGTGKT).

The protein belongs to the AAA ATPase family. In terms of assembly, interacts with PSMD5.

The protein localises to the cytoplasm. It is found in the nucleus. The 26S proteasome is involved in the ATP-dependent degradation of ubiquitinated proteins. The regulatory (or ATPase) complex confers ATP dependency and substrate specificity to the 26S complex. This chain is 26S proteasome regulatory subunit 4 (Rpt2), found in Drosophila melanogaster (Fruit fly).